We begin with the raw amino-acid sequence, 180 residues long: uncharacterized protein (180 aa).

Residues 35-163 (LRHRATYIVV…TPDSLKALAL (129 aa)) form the Nudix hydrolase domain. The Nudix box signature appears at 72–94 (GGVVQADEQLLESARREAEEELG). Mg(2+) is bound by residues glutamate 88 and glutamate 92.

It belongs to the Nudix hydrolase family. The cofactor is Mg(2+).

This is an uncharacterized protein from Shigella flexneri.